We begin with the raw amino-acid sequence, 423 residues long: Dihydroorotase (423 aa).

Zn(2+) is bound by residues His60 and His62. Substrate is bound by residues 62–64 (HFR) and Asn94. Asp152, His179, His232, and Asp305 together coordinate Zn(2+). Asp305 is an active-site residue. Residues His309 and 323–324 (PG) contribute to the substrate site.

The protein belongs to the metallo-dependent hydrolases superfamily. DHOase family. Class I DHOase subfamily. Zn(2+) serves as cofactor.

It carries out the reaction (S)-dihydroorotate + H2O = N-carbamoyl-L-aspartate + H(+). The protein operates within pyrimidine metabolism; UMP biosynthesis via de novo pathway; (S)-dihydroorotate from bicarbonate: step 3/3. Catalyzes the reversible cyclization of carbamoyl aspartate to dihydroorotate. The polypeptide is Dihydroorotase (Sulfurihydrogenibium sp. (strain YO3AOP1)).